A 130-amino-acid polypeptide reads, in one-letter code: Small ribosomal subunit protein uS11 (130 aa).

This sequence belongs to the universal ribosomal protein uS11 family. As to quaternary structure, part of the 30S ribosomal subunit. Interacts with proteins S7 and S18. Binds to IF-3.

Functionally, located on the platform of the 30S subunit, it bridges several disparate RNA helices of the 16S rRNA. Forms part of the Shine-Dalgarno cleft in the 70S ribosome. The polypeptide is Small ribosomal subunit protein uS11 (Gluconacetobacter diazotrophicus (strain ATCC 49037 / DSM 5601 / CCUG 37298 / CIP 103539 / LMG 7603 / PAl5)).